The sequence spans 58 residues: Mu-diguetoxin-Dc1b (58 aa).

Intrachain disulfides connect Cys12–Cys26, Cys20–Cys40, Cys25–Cys54, and Cys42–Cys52.

It belongs to the neurotoxin 26 (DTX) family. In terms of tissue distribution, expressed by the venom gland.

The protein resides in the secreted. Its function is as follows. Acts by delaying the inactivation of presynaptic voltage-sensitive sodium channels (Nav). Acts against insects and cause a progressive spastic paralysis. This Diguetia canities (Desert bush spider) protein is Mu-diguetoxin-Dc1b.